A 311-amino-acid polypeptide reads, in one-letter code: tRNA-cytidine(32) 2-sulfurtransferase (311 aa).

A PP-loop motif motif is present at residues 47–52; it reads SGGKDS. C122, C125, and C213 together coordinate [4Fe-4S] cluster.

Belongs to the TtcA family. In terms of assembly, homodimer. The cofactor is Mg(2+). Requires [4Fe-4S] cluster as cofactor.

Its subcellular location is the cytoplasm. The catalysed reaction is cytidine(32) in tRNA + S-sulfanyl-L-cysteinyl-[cysteine desulfurase] + AH2 + ATP = 2-thiocytidine(32) in tRNA + L-cysteinyl-[cysteine desulfurase] + A + AMP + diphosphate + H(+). The protein operates within tRNA modification. Catalyzes the ATP-dependent 2-thiolation of cytidine in position 32 of tRNA, to form 2-thiocytidine (s(2)C32). The sulfur atoms are provided by the cysteine/cysteine desulfurase (IscS) system. The polypeptide is tRNA-cytidine(32) 2-sulfurtransferase (Klebsiella pneumoniae subsp. pneumoniae (strain ATCC 700721 / MGH 78578)).